A 962-amino-acid polypeptide reads, in one-letter code: Glycine dehydrogenase (decarboxylating) (962 aa).

Lys-709 is subject to N6-(pyridoxal phosphate)lysine.

The protein belongs to the GcvP family. In terms of assembly, the glycine cleavage system is composed of four proteins: P, T, L and H. The cofactor is pyridoxal 5'-phosphate.

It catalyses the reaction N(6)-[(R)-lipoyl]-L-lysyl-[glycine-cleavage complex H protein] + glycine + H(+) = N(6)-[(R)-S(8)-aminomethyldihydrolipoyl]-L-lysyl-[glycine-cleavage complex H protein] + CO2. Functionally, the glycine cleavage system catalyzes the degradation of glycine. The P protein binds the alpha-amino group of glycine through its pyridoxal phosphate cofactor; CO(2) is released and the remaining methylamine moiety is then transferred to the lipoamide cofactor of the H protein. This chain is Glycine dehydrogenase (decarboxylating), found in Shewanella frigidimarina (strain NCIMB 400).